We begin with the raw amino-acid sequence, 363 residues long: NAD(P)H-quinone oxidoreductase subunit 1, chloroplastic (363 aa).

A run of 6 helical transmembrane segments spans residues 30 to 50 (LVPI…IVWL), 98 to 118 (FSIG…IIPF), 129 to 149 (IGVF…LMSG), 248 to 268 (YSGI…LVSS), 300 to 320 (VFGT…FLFI), and 336 to 356 (LLNL…LLTT).

This sequence belongs to the complex I subunit 1 family. NDH is composed of at least 16 different subunits, 5 of which are encoded in the nucleus.

Its subcellular location is the plastid. It localises to the chloroplast thylakoid membrane. The catalysed reaction is a plastoquinone + NADH + (n+1) H(+)(in) = a plastoquinol + NAD(+) + n H(+)(out). It carries out the reaction a plastoquinone + NADPH + (n+1) H(+)(in) = a plastoquinol + NADP(+) + n H(+)(out). NDH shuttles electrons from NAD(P)H:plastoquinone, via FMN and iron-sulfur (Fe-S) centers, to quinones in the photosynthetic chain and possibly in a chloroplast respiratory chain. The immediate electron acceptor for the enzyme in this species is believed to be plastoquinone. Couples the redox reaction to proton translocation, and thus conserves the redox energy in a proton gradient. This Vitis vinifera (Grape) protein is NAD(P)H-quinone oxidoreductase subunit 1, chloroplastic.